The following is a 590-amino-acid chain: Aspartate--tRNA(Asp/Asn) ligase (590 aa).

Residue Glu175 participates in L-aspartate binding. The segment at 199–202 (QQYK) is aspartate. The L-aspartate site is built by Arg221 and His450. 221–223 (RDE) provides a ligand contact to ATP. Glu484 is an ATP binding site. Arg491 provides a ligand contact to L-aspartate. 536–539 (GVDR) lines the ATP pocket.

It belongs to the class-II aminoacyl-tRNA synthetase family. Type 1 subfamily. As to quaternary structure, homodimer.

The protein localises to the cytoplasm. The enzyme catalyses tRNA(Asx) + L-aspartate + ATP = L-aspartyl-tRNA(Asx) + AMP + diphosphate. Aspartyl-tRNA synthetase with relaxed tRNA specificity since it is able to aspartylate not only its cognate tRNA(Asp) but also tRNA(Asn). Reaction proceeds in two steps: L-aspartate is first activated by ATP to form Asp-AMP and then transferred to the acceptor end of tRNA(Asp/Asn). The polypeptide is Aspartate--tRNA(Asp/Asn) ligase (Rhodopseudomonas palustris (strain BisB5)).